The primary structure comprises 67 residues: Alpha-toxin Cn12 (67 aa).

Positions 1-66 constitute an LCN-type CS-alpha/beta domain; sequence RDGYPLASNG…WGDSGTGPCR (66 aa). Intrachain disulfides connect cysteine 11/cysteine 65, cysteine 15/cysteine 40, cysteine 25/cysteine 45, and cysteine 29/cysteine 47.

In terms of tissue distribution, expressed by the venom gland.

Its subcellular location is the secreted. In terms of biological role, alpha toxins bind voltage-independently at site-3 of sodium channels (Nav) and inhibit the inactivation of the activated channels, thereby blocking neuronal transmission. This toxin binds, in vitro, to sodium channels and inhibits the inactivation of the activated channels. Seems not toxic to mice, crickets and sweet-water shrimps. The chain is Alpha-toxin Cn12 from Centruroides noxius (Mexican scorpion).